Reading from the N-terminus, the 370-residue chain is Homoserine O-acetyltransferase (370 aa).

An AB hydrolase-1 domain is found at 44–350; it reads NAILVAHAWT…AYGHDAFLLE (307 aa). Serine 150 acts as the Nucleophile in catalysis. Arginine 217 lines the substrate pocket. Catalysis depends on residues aspartate 311 and histidine 344. Aspartate 345 contacts substrate.

Belongs to the AB hydrolase superfamily. MetX family. In terms of assembly, homodimer.

The protein resides in the cytoplasm. The enzyme catalyses L-homoserine + acetyl-CoA = O-acetyl-L-homoserine + CoA. Its pathway is amino-acid biosynthesis; L-methionine biosynthesis via de novo pathway; O-acetyl-L-homoserine from L-homoserine: step 1/1. In terms of biological role, transfers an acetyl group from acetyl-CoA to L-homoserine, forming acetyl-L-homoserine. The chain is Homoserine O-acetyltransferase from Geotalea uraniireducens (strain Rf4) (Geobacter uraniireducens).